A 107-amino-acid polypeptide reads, in one-letter code: Phosphoribosyl-ATP pyrophosphatase (107 aa).

It belongs to the PRA-PH family.

The protein resides in the cytoplasm. The catalysed reaction is 1-(5-phospho-beta-D-ribosyl)-ATP + H2O = 1-(5-phospho-beta-D-ribosyl)-5'-AMP + diphosphate + H(+). Its pathway is amino-acid biosynthesis; L-histidine biosynthesis; L-histidine from 5-phospho-alpha-D-ribose 1-diphosphate: step 2/9. The chain is Phosphoribosyl-ATP pyrophosphatase from Rhizobium etli (strain CIAT 652).